A 340-amino-acid chain; its full sequence is Ferredoxin--NADP reductase (340 aa).

Residues Asp-33, Gln-41, Tyr-46, Ala-86, Phe-120, Asp-286, and Thr-327 each coordinate FAD.

This sequence belongs to the ferredoxin--NADP reductase type 2 family. Homodimer. Requires FAD as cofactor.

It carries out the reaction 2 reduced [2Fe-2S]-[ferredoxin] + NADP(+) + H(+) = 2 oxidized [2Fe-2S]-[ferredoxin] + NADPH. This is Ferredoxin--NADP reductase from Rickettsia conorii (strain ATCC VR-613 / Malish 7).